The chain runs to 155 residues: Large ribosomal subunit protein eL24 (155 aa).

Positions 119–155 (VKAAKKAAAPAPAKKSAPKQKAAKVTQKAAPRVGGKR) are disordered. A compositionally biased stretch (low complexity) spans 124–133 (KAAAPAPAKK).

The protein belongs to the eukaryotic ribosomal protein eL24 family.

This is Large ribosomal subunit protein eL24 (RpL24) from Drosophila melanogaster (Fruit fly).